The primary structure comprises 258 residues: Axonemal dynein light intermediate polypeptide 1 (258 aa).

Disordered stretches follow at residues 1 to 60 (MIPP…CVPD) and 202 to 231 (DLER…EEKK). Residues 176-255 (MRKALQAEQG…LKAQLEGIIA (80 aa)) are a coiled coil.

It belongs to the inner dynein arm light chain family. In terms of assembly, interacts with CFAP45. Interacts with DYNC1H1.

It localises to the cell projection. The protein resides in the cilium. The protein localises to the flagellum. Its subcellular location is the dynein axonemal particle. It is found in the cytoplasm. In terms of biological role, involved in sperm flagellum assembly. This Rattus norvegicus (Rat) protein is Axonemal dynein light intermediate polypeptide 1.